Reading from the N-terminus, the 154-residue chain is Large ribosomal subunit protein uL13 (154 aa).

Residues 129–154 (SQHPHEAQQPEALDVGTLNRKNKRIA) form a disordered region.

It belongs to the universal ribosomal protein uL13 family. As to quaternary structure, part of the 50S ribosomal subunit.

Functionally, this protein is one of the early assembly proteins of the 50S ribosomal subunit, although it is not seen to bind rRNA by itself. It is important during the early stages of 50S assembly. This Bartonella bacilliformis (strain ATCC 35685 / KC583 / Herrer 020/F12,63) protein is Large ribosomal subunit protein uL13.